The primary structure comprises 309 residues: Probable 2,4-dienoyl-CoA reductase 3 [(3E)-enoyl-CoA-producing] (309 aa).

NADP(+) is bound by residues 32–37 (GGGTGI), R57, and D83. Residue R57 participates in substrate binding. Substrate is bound by residues F116 and S124. Y166 (proton acceptor) is an active-site residue. NADP(+)-binding positions include K181 and 207 to 210 (PGPI). R218 contributes to the substrate binding site.

This sequence belongs to the short-chain dehydrogenases/reductases (SDR) family. 2,4-dienoyl-CoA reductase subfamily.

It carries out the reaction a (2E,4E)-dienoyl-CoA + NADPH + H(+) = a 4,5-saturated-(3E)-enoyl-CoA + NADP(+). The catalysed reaction is a (2E,4Z)-dienoyl-CoA + NADPH + H(+) = a 4,5-saturated-(3E)-enoyl-CoA + NADP(+). Its function is as follows. Auxiliary enzyme of beta-oxidation. It participates in the metabolism of unsaturated fatty enoyl-CoA esters having double bonds in both even- and odd-numbered positions. Catalyzes the NADP-dependent reduction of 2,4-dienoyl-CoA to yield trans-3-enoyl-CoA. The chain is Probable 2,4-dienoyl-CoA reductase 3 [(3E)-enoyl-CoA-producing] from Caenorhabditis elegans.